Here is a 245-residue protein sequence, read N- to C-terminus: Eukaryotic translation initiation factor 6 (245 aa).

It belongs to the eIF-6 family. Monomer. Associates with the 60S ribosomal subunit.

Its subcellular location is the cytoplasm. It is found in the nucleus. The protein resides in the nucleolus. Binds to the 60S ribosomal subunit and prevents its association with the 40S ribosomal subunit to form the 80S initiation complex in the cytoplasm. May also be involved in ribosome biogenesis. The protein is Eukaryotic translation initiation factor 6 of Drosophila melanogaster (Fruit fly).